The primary structure comprises 189 residues: Probable nicotinate-nucleotide adenylyltransferase (189 aa).

This sequence belongs to the NadD family.

The catalysed reaction is nicotinate beta-D-ribonucleotide + ATP + H(+) = deamido-NAD(+) + diphosphate. It participates in cofactor biosynthesis; NAD(+) biosynthesis; deamido-NAD(+) from nicotinate D-ribonucleotide: step 1/1. Its function is as follows. Catalyzes the reversible adenylation of nicotinate mononucleotide (NaMN) to nicotinic acid adenine dinucleotide (NaAD). The sequence is that of Probable nicotinate-nucleotide adenylyltransferase from Cereibacter sphaeroides (strain ATCC 17023 / DSM 158 / JCM 6121 / CCUG 31486 / LMG 2827 / NBRC 12203 / NCIMB 8253 / ATH 2.4.1.) (Rhodobacter sphaeroides).